The sequence spans 189 residues: GTP cyclohydrolase 1 (189 aa).

Zn(2+)-binding residues include Cys-76, His-79, and Cys-149.

This sequence belongs to the GTP cyclohydrolase I family. Homomer.

It carries out the reaction GTP + H2O = 7,8-dihydroneopterin 3'-triphosphate + formate + H(+). It participates in cofactor biosynthesis; 7,8-dihydroneopterin triphosphate biosynthesis; 7,8-dihydroneopterin triphosphate from GTP: step 1/1. In Dehalococcoides mccartyi (strain ATCC BAA-2100 / JCM 16839 / KCTC 5957 / BAV1), this protein is GTP cyclohydrolase 1.